We begin with the raw amino-acid sequence, 40 residues long: Natriuretic peptide HsNP-b (40 aa).

The propeptide occupies Ser1–Ile8. The interval Ser1 to Ser40 is disordered. Cys12 and Cys28 are oxidised to a cystine. Positions Pro31–Ser40 are enriched in basic residues.

Belongs to the natriuretic peptide family. Expressed by the venom gland.

Its subcellular location is the secreted. Its function is as follows. Snake venom natriuretic peptide that targets both NPR1 and NPR2. Exhibits hypotensive and vasodepressor activities. In Hoplocephalus stephensii (Stephens's banded snake), this protein is Natriuretic peptide HsNP-b.